Reading from the N-terminus, the 87-residue chain is DNA-directed RNA polymerase subunit omega (87 aa).

Belongs to the RNA polymerase subunit omega family. The RNAP catalytic core consists of 2 alpha, 1 beta, 1 beta' and 1 omega subunit. When a sigma factor is associated with the core the holoenzyme is formed, which can initiate transcription.

It catalyses the reaction RNA(n) + a ribonucleoside 5'-triphosphate = RNA(n+1) + diphosphate. Promotes RNA polymerase assembly. Latches the N- and C-terminal regions of the beta' subunit thereby facilitating its interaction with the beta and alpha subunits. In Pseudomonas entomophila (strain L48), this protein is DNA-directed RNA polymerase subunit omega.